The sequence spans 51 residues: Large ribosomal subunit protein eL39 (51 aa).

It belongs to the eukaryotic ribosomal protein eL39 family.

This chain is Large ribosomal subunit protein eL39, found in Sulfurisphaera tokodaii (strain DSM 16993 / JCM 10545 / NBRC 100140 / 7) (Sulfolobus tokodaii).